The primary structure comprises 432 residues: UDP-N-acetylmuramoylalanine--D-glutamate ligase (432 aa).

98–104 (GTNGKST) lines the ATP pocket.

This sequence belongs to the MurCDEF family.

It is found in the cytoplasm. The catalysed reaction is UDP-N-acetyl-alpha-D-muramoyl-L-alanine + D-glutamate + ATP = UDP-N-acetyl-alpha-D-muramoyl-L-alanyl-D-glutamate + ADP + phosphate + H(+). It functions in the pathway cell wall biogenesis; peptidoglycan biosynthesis. Cell wall formation. Catalyzes the addition of glutamate to the nucleotide precursor UDP-N-acetylmuramoyl-L-alanine (UMA). In Fusobacterium nucleatum subsp. nucleatum (strain ATCC 25586 / DSM 15643 / BCRC 10681 / CIP 101130 / JCM 8532 / KCTC 2640 / LMG 13131 / VPI 4355), this protein is UDP-N-acetylmuramoylalanine--D-glutamate ligase.